A 335-amino-acid chain; its full sequence is Pro-cathepsin H (335 aa).

An N-terminal signal peptide occupies residues 1–22; the sequence is MWAVLPLLCAGAWLLGAPACGA. Positions 23–97 are cleaved as a propeptide — activation peptide; the sequence is AELAANSLEK…DELKRKYLWS (75 aa). N72 and N101 each carry an N-linked (GlcNAc...) asparagine glycan. 4 cysteine pairs are disulfide-bonded: C102–C327, C138–C181, C172–C214, and C272–C322. The propeptide occupies 106–115; it reads KSNYLRGTGP. C141 is a catalytic residue. A glycan (N-linked (GlcNAc...) asparagine) is linked at N230. Catalysis depends on residues H281 and N301.

It belongs to the peptidase C1 family. Composed of a mini chain and a large chain. The large chain may be split into heavy and light chain. All chains are held together by disulfide bonds.

The protein resides in the lysosome. The enzyme catalyses Hydrolysis of proteins, acting as an aminopeptidase (notably, cleaving Arg-|-Xaa bonds) as well as an endopeptidase.. Its function is as follows. Important for the overall degradation of proteins in lysosomes. The protein is Pro-cathepsin H (CTSH) of Bos taurus (Bovine).